The chain runs to 171 residues: Large ribosomal subunit protein uL10 (171 aa).

The protein belongs to the universal ribosomal protein uL10 family. Part of the ribosomal stalk of the 50S ribosomal subunit. The N-terminus interacts with L11 and the large rRNA to form the base of the stalk. The C-terminus forms an elongated spine to which L12 dimers bind in a sequential fashion forming a multimeric L10(L12)X complex.

Its function is as follows. Forms part of the ribosomal stalk, playing a central role in the interaction of the ribosome with GTP-bound translation factors. This is Large ribosomal subunit protein uL10 from Erythrobacter litoralis (strain HTCC2594).